The primary structure comprises 223 residues: Ion-translocating oxidoreductase complex subunit E (223 aa).

The next 6 membrane-spanning stretches (helical) occupy residues 17 to 37 (NGVL…GTAT), 40 to 60 (LGMG…VAMF), 70 to 90 (IPVY…GMNA), 94 to 114 (ELYK…LPLA), 129 to 149 (FLDG…IGAV), and 182 to 202 (WGIL…LMVV).

It belongs to the NqrDE/RnfAE family. The complex is composed of six subunits: RnfA, RnfB, RnfC, RnfD, RnfE and RnfG.

It is found in the cell inner membrane. In terms of biological role, part of a membrane-bound complex that couples electron transfer with translocation of ions across the membrane. The sequence is that of Ion-translocating oxidoreductase complex subunit E from Paramagnetospirillum magneticum (strain ATCC 700264 / AMB-1) (Magnetospirillum magneticum).